Reading from the N-terminus, the 250-residue chain is Proteasome subunit alpha type-7-like (250 aa).

Residue S132 is glycosylated (O-linked (GlcNAc) serine).

It belongs to the peptidase T1A family. In terms of assembly, the 26S proteasome consists of a 20S proteasome core and two 19S regulatory subunits. The 20S proteasome core is a barrel-shaped complex made of 28 subunits that are arranged in four stacked rings. The two outer rings are each formed by seven alpha subunits, and the two inner rings are formed by seven beta subunits. The proteolytic activity is exerted by three beta-subunits PSMB5, PSMB6 and PSMB7. PSMA7 interacts directly with the PSMG1-PSMG2 heterodimer which promotes 20S proteasome assembly. Interacts with HIF1A. Interacts with RAB7A. Interacts with PRKN. Interacts with ABL1 and ABL2. Interacts with EMAP2. Interacts with MAVS.

Its subcellular location is the cytoplasm. The protein resides in the nucleus. Component of the 20S core proteasome complex involved in the proteolytic degradation of most intracellular proteins. This complex plays numerous essential roles within the cell by associating with different regulatory particles. Associated with two 19S regulatory particles, forms the 26S proteasome and thus participates in the ATP-dependent degradation of ubiquitinated proteins. The 26S proteasome plays a key role in the maintenance of protein homeostasis by removing misfolded or damaged proteins that could impair cellular functions, and by removing proteins whose functions are no longer required. Associated with the PA200 or PA28, the 20S proteasome mediates ubiquitin-independent protein degradation. This type of proteolysis is required in several pathways including spermatogenesis (20S-PA200 complex) or generation of a subset of MHC class I-presented antigenic peptides (20S-PA28 complex). Inhibits the transactivation function of HIF-1A under both normoxic and hypoxia-mimicking conditions. The interaction with EMAP2 increases the proteasome-mediated HIF-1A degradation under the hypoxic conditions. Plays a role in hepatitis C virus internal ribosome entry site-mediated translation. Mediates nuclear translocation of the androgen receptor (AR) and thereby enhances androgen-mediated transactivation. Promotes MAVS degradation and thereby negatively regulates MAVS-mediated innate immune response. The sequence is that of Proteasome subunit alpha type-7-like (PSMA7L) from Macaca fascicularis (Crab-eating macaque).